The following is a 912-amino-acid chain: Multiple C2 and transmembrane domain-containing protein (912 aa).

Residues M1 to P33 are compositionally biased toward low complexity. Disordered stretches follow at residues M1–K80 and S145–S165. A compositionally biased stretch (polar residues) spans P38–R49. C2 domains follow at residues Q218–L337, R371–L493, and E522–D637. Ca(2+) is bound by residues D252, D258, D305, D307, and D313. Ca(2+) is bound by residues D553, D559, D605, and D607. The next 2 helical transmembrane spans lie at I729 to L749 and L826 to L846. The disordered stretch occupies residues N887–S912.

It depends on Ca(2+) as a cofactor. In terms of tissue distribution, motor neurons (at protein level).

Its subcellular location is the endoplasmic reticulum membrane. Its function is as follows. Calcium sensor which is essential for the stabilization of normal baseline neurotransmitter release and for the induction and long-term maintenance of presynaptic homeostatic plasticity. The protein is Multiple C2 and transmembrane domain-containing protein of Drosophila melanogaster (Fruit fly).